Reading from the N-terminus, the 462-residue chain is L-seryl-tRNA(Sec) selenium transferase (462 aa).

Lys293 bears the N6-(pyridoxal phosphate)lysine mark.

The protein belongs to the SelA family. It depends on pyridoxal 5'-phosphate as a cofactor.

It is found in the cytoplasm. It catalyses the reaction L-seryl-tRNA(Sec) + selenophosphate + H(+) = L-selenocysteinyl-tRNA(Sec) + phosphate. Its pathway is aminoacyl-tRNA biosynthesis; selenocysteinyl-tRNA(Sec) biosynthesis; selenocysteinyl-tRNA(Sec) from L-seryl-tRNA(Sec) (bacterial route): step 1/1. Functionally, converts seryl-tRNA(Sec) to selenocysteinyl-tRNA(Sec) required for selenoprotein biosynthesis. This is L-seryl-tRNA(Sec) selenium transferase from Clostridium botulinum (strain Okra / Type B1).